The chain runs to 947 residues: Protocadherin alpha-4 (947 aa).

An N-terminal signal peptide occupies residues 1-29 (MEFSWGSGQESQRLLLSFLLLAIWEAGNS). Cadherin domains are found at residues 30 to 133 (QIHY…PPRF), 134 to 242 (PTTQ…APVF), 243 to 350 (DRSL…VPEL), 351 to 455 (EFKS…APVF), 456 to 565 (AQPE…APTL), and 573 to 681 (SGGI…APSR). Residues 30 to 697 (QIHYSIPEEA…HSEASLVDVN (668 aa)) lie on the Extracellular side of the membrane. C96 and C102 form a disulfide bridge. N-linked (GlcNAc...) asparagine glycosylation is found at N257 and N265. O-linked (Man) threonine glycosylation occurs at T438. Residues S440 and S442 are each glycosylated (O-linked (Man) serine). The N-linked (GlcNAc...) asparagine glycan is linked to N548. Residues 698 to 718 (VYLIIAICAVSSLLVLTLLLY) traverse the membrane as a helical segment. Topologically, residues 719 to 947 (TALRCSTVPS…GNSTTDNSDQ (229 aa)) are cytoplasmic. 6 PXXP repeats span residues 734-737 (PPKP), 774-777 (PSLS), 796-799 (PRQP), 829-832 (PGGP), 870-873 (PGNP), and 888-891 (PGSP). Residues 734-891 (PPKPVMVCSS…PDKFIIPGSP (158 aa)) form a 6 X 4 AA repeats of P-X-X-P region. Residues 738–947 (VMVCSSAVGS…GNSTTDNSDQ (210 aa)) are required for interaction with FYN. Disordered stretches follow at residues 761 to 805 (GEYP…DWRY) and 824 to 853 (ILRA…EVSP). The disordered stretch occupies residues 891–947 (PAIISIRQEPANNQIDKSDFITFGKKEETKKKKKKKKGNKTQEKKEKGNSTTDNSDQ). The span at 906–920 (DKSDFITFGKKEETK) shows a compositional bias: basic and acidic residues.

As to quaternary structure, forms homodimers in trans (molecules expressed by two different cells). Forms promiscuous heterodimers in cis (at the plasma membrane of the same cell) with other protocadherins. Interacts with FYN. Detected in brain throughout embryonic development. Detected in adult brain, in particular in cerebellum and forebrain.

The protein resides in the cell membrane. Functionally, calcium-dependent cell-adhesion protein involved in cells self-recognition and non-self discrimination. Thereby, it is involved in the establishment and maintenance of specific neuronal connections in the brain. This is Protocadherin alpha-4 from Mus musculus (Mouse).